The primary structure comprises 243 residues: uncharacterized protein (243 aa).

It localises to the nucleus. The protein localises to the nucleolus. This is an uncharacterized protein from Schizosaccharomyces pombe (strain 972 / ATCC 24843) (Fission yeast).